A 263-amino-acid chain; its full sequence is Undecaprenyl-diphosphatase (263 aa).

Helical transmembrane passes span 40–60 (PGVL…LVYF), 87–107 (LLII…DFFV), 109–129 (AFHN…LLFF), 186–206 (FSFL…LLEW), 219–239 (AGAV…MGVV), and 243–263 (RLYA…AISS).

The protein belongs to the UppP family.

The protein localises to the cell inner membrane. The enzyme catalyses di-trans,octa-cis-undecaprenyl diphosphate + H2O = di-trans,octa-cis-undecaprenyl phosphate + phosphate + H(+). In terms of biological role, catalyzes the dephosphorylation of undecaprenyl diphosphate (UPP). Confers resistance to bacitracin. This Syntrophotalea carbinolica (strain DSM 2380 / NBRC 103641 / GraBd1) (Pelobacter carbinolicus) protein is Undecaprenyl-diphosphatase.